Consider the following 139-residue polypeptide: D-ribose pyranase (139 aa).

Histidine 20 acts as the Proton donor in catalysis. Residues aspartate 28, histidine 106, and 128-130 (YAN) contribute to the substrate site.

Belongs to the RbsD / FucU family. RbsD subfamily. Homodecamer.

It is found in the cytoplasm. It carries out the reaction beta-D-ribopyranose = beta-D-ribofuranose. It participates in carbohydrate metabolism; D-ribose degradation; D-ribose 5-phosphate from beta-D-ribopyranose: step 1/2. In terms of biological role, catalyzes the interconversion of beta-pyran and beta-furan forms of D-ribose. This is D-ribose pyranase from Serratia proteamaculans (strain 568).